Consider the following 502-residue polypeptide: Xylan O-acetyltransferase 13 (502 aa).

Topologically, residues 1–53 (MWSALFSHLREVHKRSGVKEEKLIMKSPPAAGEAGCHKPQATATNKMTVLQSP) are cytoplasmic. The helical; Signal-anchor for type II membrane protein transmembrane segment at 54–76 (LGLRTILTSLVAFFIVVSSVSLL) threads the bilayer. Residues 77–502 (FDRGQDAQAQ…EFLYAYIMHK (426 aa)) lie on the Lumenal side of the membrane. Disulfide bonds link C152–C203, C174–C239, C183–C483, and C399–C479. N-linked (GlcNAc...) asparagine glycosylation is found at N153, N163, N189, and N209. The short motif at 226–228 (GDS) is the GDS motif element. S228 serves as the catalytic Nucleophile. N-linked (GlcNAc...) asparagine glycans are attached at residues N255, N267, N372, N401, and N442. The Proton donor role is filled by D478. The DXXH motif motif lies at 478-481 (DCTH). H481 serves as the catalytic Proton acceptor.

Belongs to the PC-esterase family. TBL subfamily.

It localises to the golgi apparatus membrane. Functionally, xylan acetyltransferase required for 2-O- and 3-O-monoacetylation of xylosyl residues in xylan. Catalyzes the 2-O-acetylation of xylan, followed by nonenzymatic acetyl migration to the O-3 position, resulting in products that are monoacetylated at both O-2 and O-3 positions. This Oryza sativa subsp. japonica (Rice) protein is Xylan O-acetyltransferase 13.